We begin with the raw amino-acid sequence, 329 residues long: Cytosolic arginine sensor for mTORC1 subunit 2 (329 aa).

ACT domains lie at Ala-72–Leu-139 and Glu-262–Gln-322.

This sequence belongs to the GATS family. May form homodimers and heterodimers.

The protein resides in the cytoplasm. Its subcellular location is the cytosol. Functions as a negative regulator of the TORC1 signaling pathway. This is Cytosolic arginine sensor for mTORC1 subunit 2 from Xenopus tropicalis (Western clawed frog).